The primary structure comprises 299 residues: Tyrosine recombinase XerC (299 aa).

Residues 1-85 enclose the Core-binding (CB) domain; that stretch reads MQNELDAYFE…SVRGLYRYLN (85 aa). The region spanning 106–285 is the Tyr recombinase domain; that stretch reads RLPRLLDTDR…DFQHLAKVYD (180 aa). Active-site residues include Arg146, Lys170, His237, Arg240, and His263. Tyr272 functions as the O-(3'-phospho-DNA)-tyrosine intermediate in the catalytic mechanism.

This sequence belongs to the 'phage' integrase family. XerC subfamily. As to quaternary structure, forms a cyclic heterotetrameric complex composed of two molecules of XerC and two molecules of XerD.

The protein localises to the cytoplasm. In terms of biological role, site-specific tyrosine recombinase, which acts by catalyzing the cutting and rejoining of the recombining DNA molecules. The XerC-XerD complex is essential to convert dimers of the bacterial chromosome into monomers to permit their segregation at cell division. It also contributes to the segregational stability of plasmids. This chain is Tyrosine recombinase XerC, found in Stutzerimonas stutzeri (strain A1501) (Pseudomonas stutzeri).